A 114-amino-acid chain; its full sequence is Superoxide dismutase [Cu-Zn] (114 aa).

Residues His-37, His-39, and His-54 each contribute to the Cu cation site. The disordered stretch occupies residues 49 to 73 (MSSGPHYNPRNKEHGAPTDENRHLG). 4 residues coordinate Zn(2+): His-54, His-62, His-71, and Asp-74. The segment covering 58-73 (RNKEHGAPTDENRHLG) has biased composition (basic and acidic residues). His-111 lines the Cu cation pocket.

The protein belongs to the Cu-Zn superoxide dismutase family. In terms of assembly, homodimer. Cu cation is required as a cofactor. The cofactor is Zn(2+).

It localises to the cytoplasm. It catalyses the reaction 2 superoxide + 2 H(+) = H2O2 + O2. In terms of biological role, destroys radicals which are normally produced within the cells and which are toxic to biological systems. This Drosophila madeirensis (Fruit fly) protein is Superoxide dismutase [Cu-Zn].